The sequence spans 816 residues: H(+)/Cl(-) exchange transporter 5 (816 aa).

Topologically, residues 1-124 are cytoplasmic; sequence MAMWQGAMDN…WALIHSVSDA (124 aa). 2 helical membrane passes run 125-162 and 208-231; these read FSGW…ICTG and VNYF…VKVF. A Selectivity filter part_1 motif is present at residues 237–241; it reads GSGIP. Serine 238 contacts chloride. Residues 240–247 constitute an intramembrane region (helical); that stretch reads IPEIKTIL. The next 2 membrane-spanning stretches (helical) occupy residues 256-275 and 281-300; these read LGKW…VSSG and EGPL…HCFN. A Selectivity filter part_2 motif is present at residues 279-283; the sequence is GKEGP. Intramembrane regions (helical) lie at residues 312–324 and 328–336; these read VLSA…VSVA and PIGGVLFSL. 5 helical membrane passes run 348–366, 389–414, 422–442, 498–518, and 523–542; these read LWRS…RSIN, LVPF…IAWC, LGKY…ILAF, MWQL…TFGM, and GLFI…LGVG. The short motif at 523 to 527 is the Selectivity filter part_3 element; that stretch reads GLFIP. Residue phenylalanine 525 participates in chloride binding. Positions 570 to 584 form an intramembrane region, helical; it reads GLYAMVGAAACLGGV. The note=Loop between two helices intramembrane region spans 585 to 587; that stretch reads TRM. Positions 588 to 599 form an intramembrane region, helical; the sequence is TVSLVVIMFELT. The note=Loop between two helices intramembrane region spans 600–604; sequence GGLEY. A helical transmembrane segment spans residues 605 to 622; it reads IVPLMAAAMTSKWVADAL. Topologically, residues 623-816 are cytoplasmic; sequence GREGIYDAHI…NQDPDSILFN (194 aa). Tyrosine 628 lines the chloride pocket. CBS domains lie at 656–720 and 752–812; these read MKPR…ARKK and ILDL…DPDS. ATP is bound by residues threonine 666, 687–689, and 794–797; these read YSG and TKKD.

It belongs to the chloride channel (TC 2.A.49) family. ClC-5/CLCN5 subfamily. Interacts with NEDD4 and NEDD4L. Ubiquitinated by NEDD4L in the presence of albumin; which promotes endocytosis and proteasomal degradation.

It is found in the golgi apparatus membrane. The protein localises to the endosome membrane. The protein resides in the cell membrane. The catalysed reaction is 2 chloride(in) + H(+)(out) = 2 chloride(out) + H(+)(in). Proton-coupled chloride transporter. Functions as antiport system and exchanges chloride ions against protons. Important for normal acidification of the endosome lumen. May play an important role in renal tubular function. The CLC channel family contains both chloride channels and proton-coupled anion transporters that exchange chloride or another anion for protons. The absence of conserved gating glutamate residues is typical for family members that function as channels. This is H(+)/Cl(-) exchange transporter 5 (CLCN5) from Pongo abelii (Sumatran orangutan).